A 465-amino-acid chain; its full sequence is Cysteine--tRNA ligase (465 aa).

Zn(2+) is bound at residue C27. A 'HIGH' region motif is present at residues 29–39 (PTVYNFFHIGN). Residues C207, H232, and E236 each contribute to the Zn(2+) site. A 'KMSKS' region motif is present at residues 264-268 (KMSKS). An ATP-binding site is contributed by K267.

This sequence belongs to the class-I aminoacyl-tRNA synthetase family. Monomer. It depends on Zn(2+) as a cofactor.

It is found in the cytoplasm. The enzyme catalyses tRNA(Cys) + L-cysteine + ATP = L-cysteinyl-tRNA(Cys) + AMP + diphosphate. This is Cysteine--tRNA ligase from Clostridium botulinum (strain ATCC 19397 / Type A).